The sequence spans 212 residues: Leucine efflux protein (212 aa).

The next 6 membrane-spanning stretches (helical) occupy residues 12–32 (TYLV…LFVL), 49–69 (GVFI…ATLI), 71–91 (TTPI…LYLG), 122–142 (ILSL…VQFI), 153–173 (FFIL…FLII), and 188–208 (LAKV…ARLA).

The protein belongs to the Rht family.

It localises to the cell inner membrane. The enzyme catalyses L-leucine(in) + H(+)(out) = L-leucine(out) + H(+)(in). Functionally, exporter of leucine. The polypeptide is Leucine efflux protein (leuE) (Escherichia coli O6:K15:H31 (strain 536 / UPEC)).